A 349-amino-acid chain; its full sequence is GDP-mannose:glycolipid 4-beta-D-mannosyltransferase (349 aa).

The first 14 residues, 1–14, serve as a signal peptide directing secretion; that stretch reads MSASASLPVTRAAA.

Belongs to the glycosyltransferase 94 family.

The protein resides in the cell inner membrane. It catalyses the reaction beta-D-GlcA-(1-&gt;2)-alpha-D-Man-(1-&gt;3)-beta-D-Glc-(1-&gt;4)-alpha-D-Glc-di-trans,octa-cis-undecaprenyl diphosphate + GDP-alpha-D-mannose = beta-D-Man-(1-&gt;4)-beta-D-GlcA-(1-&gt;2)-alpha-D-Man-(1-&gt;3)-beta-D-Glc-(1-&gt;4)-alpha-D-Glc-di-trans,octa-cis-undecaprenyl diphosphate + GDP + H(+). It functions in the pathway glycan biosynthesis; xanthan biosynthesis. Nonprocessive beta-mannosyltransferase that catalyzes the transfer of a mannose residue from GDP-mannose to glucuronic acid-beta-1,2-mannose-alpha-1,3-glucose-beta-1,4-glucose-PP-polyisoprenyl to form the lipid-linked pentasaccharide repeating unit of xanthan, Man-GlcA-Man-Glc(2)-PP-Pol. Is involved in the biosynthesis of the exopolysaccharide xanthan. The sequence is that of GDP-mannose:glycolipid 4-beta-D-mannosyltransferase (gumI) from Xanthomonas campestris pv. campestris (strain ATCC 33913 / DSM 3586 / NCPPB 528 / LMG 568 / P 25).